Here is a 63-residue protein sequence, read N- to C-terminus: Large ribosomal subunit protein uL30 (63 aa).

This sequence belongs to the universal ribosomal protein uL30 family. Part of the 50S ribosomal subunit.

The protein is Large ribosomal subunit protein uL30 of Xanthomonas campestris pv. campestris (strain 8004).